The chain runs to 375 residues: MKRDLYETLGVQKSADEKELKSAFRKLAMKYHPDRNPGDNEAEKSFKEINEAYETLKDPQKRAAYDRYGHAAFEQGGMGNGFAGGGAHGFSDIFEDIFGEMMGGRQRRSSGGRERGADLRYNMEISLEEAYSGKTAQIRVPTSITCDVCTGTGAKPGTSPKTCGTCQGTGRVRAAQGFFSIERTCPTCGGRGQTITDPCTKCHGQGRVVEERTLSVNIPAGIEDGTRIRLSGEGEAGLRGGPAGDLYIFLSVKPHEFYQRDGADLYCAVPISMTTATLGGKFDVTTLDGTKSRVTVPEGTQAGKQFRLKGKGMPVLRSSQMGDLYIQIQIETPQKLTKRQRELLQEFEQISSKENNPESAGFFSRMKGFFDTLSE.

The J domain occupies 4 to 69 (DLYETLGVQK…QKRAAYDRYG (66 aa)). The CR-type zinc finger occupies 133 to 211 (GKTAQIRVPT…CHGQGRVVEE (79 aa)). The Zn(2+) site is built by Cys-146, Cys-149, Cys-163, Cys-166, Cys-185, Cys-188, Cys-199, and Cys-202. CXXCXGXG motif repeat units lie at residues 146-153 (CDVCTGTG), 163-170 (CGTCQGTG), 185-192 (CPTCGGRG), and 199-206 (CTKCHGQG).

The protein belongs to the DnaJ family. As to quaternary structure, homodimer. Zn(2+) is required as a cofactor.

The protein localises to the cytoplasm. In terms of biological role, participates actively in the response to hyperosmotic and heat shock by preventing the aggregation of stress-denatured proteins and by disaggregating proteins, also in an autonomous, DnaK-independent fashion. Unfolded proteins bind initially to DnaJ; upon interaction with the DnaJ-bound protein, DnaK hydrolyzes its bound ATP, resulting in the formation of a stable complex. GrpE releases ADP from DnaK; ATP binding to DnaK triggers the release of the substrate protein, thus completing the reaction cycle. Several rounds of ATP-dependent interactions between DnaJ, DnaK and GrpE are required for fully efficient folding. Also involved, together with DnaK and GrpE, in the DNA replication of plasmids through activation of initiation proteins. The chain is Chaperone protein DnaJ from Sinorhizobium medicae (strain WSM419) (Ensifer medicae).